Here is a 232-residue protein sequence, read N- to C-terminus: Ras association domain-containing protein 3 (232 aa).

Serine 2 is subject to N-acetylserine. The tract at residues 25-46 (RAPPGKSRSGQPDVEKEKETHN) is disordered. Over residues 37–46 (DVEKEKETHN) the composition is skewed to basic and acidic residues. Positions 78–180 (YTGFIKVQME…TLSFVLREHE (103 aa)) constitute a Ras-associating domain. Positions 181–228 (IGEWEAFSLPELQNFLRILDKEEDEQLQSLKRRYTAYRQKLEEALGEV) constitute an SARAH domain.

Its subcellular location is the cytoplasm. It is found in the cytoskeleton. This is Ras association domain-containing protein 3 (Rassf3) from Mus musculus (Mouse).